Consider the following 372-residue polypeptide: Cytochrome b (372 aa).

Helical transmembrane passes span 25–45, 69–90, 105–125, and 170–190; these read FGSM…FLAI, WMMQ…YIHI, WLSG…GYVL, and FFAL…IHIM. Heme b-binding residues include His75 and His89. Heme b-binding residues include His174 and His188. His193 provides a ligand contact to a ubiquinone. 4 helical membrane passes run 218–238, 280–300, 312–332, and 339–358; these read HKDM…MSFM, LGGT…PFTH, LMQF…WAAT, and FTTI…IMNP.

This sequence belongs to the cytochrome b family. The cytochrome bc1 complex contains 3 respiratory subunits (MT-CYB, CYC1 and UQCRFS1), 2 core proteins (UQCRC1 and UQCRC2) and probably 6 low-molecular weight proteins. The cofactor is heme b.

The protein localises to the mitochondrion inner membrane. Functionally, component of the ubiquinol-cytochrome c reductase complex (complex III or cytochrome b-c1 complex) that is part of the mitochondrial respiratory chain. The b-c1 complex mediates electron transfer from ubiquinol to cytochrome c. Contributes to the generation of a proton gradient across the mitochondrial membrane that is then used for ATP synthesis. In Pantherophis obsoletus (Black ratsnake), this protein is Cytochrome b (MT-CYB).